A 350-amino-acid chain; its full sequence is Phospho-N-acetylmuramoyl-pentapeptide-transferase (350 aa).

Transmembrane regions (helical) follow at residues 28 to 48 (LPLL…IPLL), 70 to 90 (GTPT…GSLI), 100 to 120 (LLSL…DDWS), 136 to 156 (LLLQ…QGWI), 164 to 184 (FGLE…VVLA), 195 to 215 (LDGL…LQLM), 221 to 241 (GDPA…GFLV), 249 to 269 (AFMG…VALL), and 328 to 348 (QSVV…GLVL).

This sequence belongs to the glycosyltransferase 4 family. MraY subfamily. The cofactor is Mg(2+).

Its subcellular location is the cell inner membrane. The catalysed reaction is UDP-N-acetyl-alpha-D-muramoyl-L-alanyl-gamma-D-glutamyl-meso-2,6-diaminopimeloyl-D-alanyl-D-alanine + di-trans,octa-cis-undecaprenyl phosphate = di-trans,octa-cis-undecaprenyl diphospho-N-acetyl-alpha-D-muramoyl-L-alanyl-D-glutamyl-meso-2,6-diaminopimeloyl-D-alanyl-D-alanine + UMP. It participates in cell wall biogenesis; peptidoglycan biosynthesis. In terms of biological role, catalyzes the initial step of the lipid cycle reactions in the biosynthesis of the cell wall peptidoglycan: transfers peptidoglycan precursor phospho-MurNAc-pentapeptide from UDP-MurNAc-pentapeptide onto the lipid carrier undecaprenyl phosphate, yielding undecaprenyl-pyrophosphoryl-MurNAc-pentapeptide, known as lipid I. This is Phospho-N-acetylmuramoyl-pentapeptide-transferase from Synechococcus sp. (strain CC9605).